Reading from the N-terminus, the 222-residue chain is Eukaryotic translation initiation factor 4E-1 (222 aa).

Basic and acidic residues predominate over residues 1–22 (MVDEVEKPASLEESKTNTREVE). The tract at residues 1–37 (MVDEVEKPASLEESKTNTREVEEGAEEVIESDDTMSS) is disordered. Residues 23–33 (EGAEEVIESDD) show a composition bias toward acidic residues. EIF4G-binding stretches follow at residues 47-50 (HPLE) and 57-93 (FDNP…NNIH). Residues 65–70 (KQAAWG), K97, and 115–116 (WE) contribute to the mRNA site. C120 and C158 are disulfide-bonded. Residues 141 to 150 (YTLLAMIGEQ) are EIF4G-binding. MRNA-binding positions include 165 to 170 (RVRQEK) and 210 to 214 (KKLDR).

The protein belongs to the eukaryotic initiation factor 4E family. EIF4F is a multi-subunit complex, the composition of which varies with external and internal environmental conditions. It is composed of at least EIF4A, EIF4E and EIF4G. EIF4E is also known to interact with other partners. In higher plants two isoforms of EIF4F have been identified, named isoform EIF4F and isoform EIF(iso)4F. Isoform EIF4F has subunits p220 and p26, whereas isoform EIF(iso)4F has subunits p82 and p28. Post-translationally, according to the redox status, the Cys-120-Cys-158 disulfide bridge may have a role in regulating protein function by affecting its ability to bind capped mRNA. Expressed ubiquitously in seedlings, roots, leaves, sepals, petals, anthers and dehisced pollen, with highest levels in pollen, maturing anthers and roots. Strongly expressed in susceptible plants but not in resistant ones.

It localises to the nucleus. Its subcellular location is the cytoplasm. Functionally, component of the protein complex eIF4F, which is involved in the recognition of the mRNA cap, ATP-dependent unwinding of 5'-terminal secondary structure and recruitment of mRNA to the ribosome. Recognizes and binds the 7-methylguanosine-containing mRNA cap during an early step in the initiation of protein synthesis and facilitates ribosome binding by inducing the unwinding of the mRNAs secondary structures. Key component of recessive resistance to potyviruses. (Microbial infection) Susceptibility host factor required for viral infection (e.g. potato virus Y (PVY) and pepper mottle virus (PepMoV)) by recruiting viral RNAs to the host ribosomal complex via an interaction with viral genome-linked protein (VPg). The chain is Eukaryotic translation initiation factor 4E-1 from Nicotiana tabacum (Common tobacco).